Consider the following 85-residue polypeptide: 4-hydroxyphenylacetate decarboxylase small subunit (85 aa).

The [4Fe-4S] cluster site is built by histidine 4, cysteine 7, cysteine 20, cysteine 34, cysteine 43, cysteine 46, cysteine 60, and cysteine 78.

This sequence belongs to the HPA decarboxylase small subunit family. Heterooctamer consisting of 4 large (HpdB) subunits and 4 small (HpdC) subunits, arranged as a tetramer of heterodimers. Requires [4Fe-4S] cluster as cofactor.

The catalysed reaction is 4-hydroxyphenylacetate + H(+) = 4-methylphenol + CO2. The enzyme catalyses 3,4-dihydroxyphenylacetate + H(+) = 4-methylcatechol + CO2. In terms of biological role, component of the HPA decarboxylase that decarboxylates phenylacetates with a hydroxyl group in the p-position. Active toward 4-hydroxyphenylacetate and 3,4-dihydroxyphenylacetate, forming 4-methylphenol and 4-methylcatechol, respectively. Is likely involved in the catabolism of aromatic amino acids such as tyrosine fermentation. 4-methylphenol (p-cresol) formation provides metabolic toxicity, which allows an active suppression of other microbes and may provide growth advantages for the producers in highly competitive environments. The small subunit is essential for enzymatic activity of HPA decarboxylase, and also seems to be involved in the regulation of the enzyme oligomeric state and catalytic activity. The sequence is that of 4-hydroxyphenylacetate decarboxylase small subunit from Clostridioides difficile (strain CD196) (Peptoclostridium difficile).